Here is a 422-residue protein sequence, read N- to C-terminus: Ferrochelatase, mitochondrial (422 aa).

Residues 1–53 (MLSASANMAAALRAAGALLREPLVHGSSRACQPWRCQSGAAVAATTEKVHHAK) constitute a mitochondrion transit peptide. Residue Lys-56 is modified to N6-acetyllysine. Arg-114, Tyr-122, and Ser-129 together coordinate protoporphyrin IX. Lys-137 is modified (N6-succinyllysine). Position 195 (Cys-195) interacts with [2Fe-2S] cluster. The active site involves His-229. The residue at position 289 (Lys-289) is an N6-acetyllysine; alternate. Lys-289 carries the post-translational modification N6-succinyllysine; alternate. Residue Asp-382 is part of the active site. [2Fe-2S] cluster is bound by residues Cys-402, Cys-405, and Cys-410. Residue Lys-414 is modified to N6-acetyllysine; alternate. Lys-414 carries the post-translational modification N6-succinyllysine; alternate.

It belongs to the ferrochelatase family. As to quaternary structure, homodimer. Homotetramer. Interaction with PGRMC1; the interaction results in decreased FECH activity. Interacts with ABCB10 and SLC25A37; this interaction forms an oligomeric complex. Forms a complex with ABCB7 and ABCB10, where a dimeric FECH bridges ABCB7 and ABCB10 homodimers; this complex may be required for cellular iron homeostasis, mitochondrial function and heme biosynthesis. Interacts with ABCB7 and ABCB10. It depends on [2Fe-2S] cluster as a cofactor. In terms of tissue distribution, erythroid and hepatic cells.

Its subcellular location is the mitochondrion inner membrane. It carries out the reaction heme b + 2 H(+) = protoporphyrin IX + Fe(2+). It participates in porphyrin-containing compound metabolism; protoheme biosynthesis; protoheme from protoporphyrin-IX: step 1/1. In terms of biological role, catalyzes the ferrous insertion into protoporphyrin IX. This Mus musculus (Mouse) protein is Ferrochelatase, mitochondrial.